The sequence spans 836 residues: DNA-directed RNA polymerase subunit beta' (836 aa).

Zn(2+) is bound by residues cysteine 71, cysteine 73, cysteine 90, and cysteine 93. Positions 623, 625, and 627 each coordinate Mg(2+).

The protein belongs to the RNA polymerase beta' chain family. RpoC1 subfamily. As to quaternary structure, in plastids the minimal PEP RNA polymerase catalytic core is composed of four subunits: alpha, beta, beta', and beta''. When a (nuclear-encoded) sigma factor is associated with the core the holoenzyme is formed, which can initiate transcription. Mg(2+) is required as a cofactor. Requires Zn(2+) as cofactor.

The protein localises to the plastid. Its subcellular location is the chloroplast. The enzyme catalyses RNA(n) + a ribonucleoside 5'-triphosphate = RNA(n+1) + diphosphate. In terms of biological role, DNA-dependent RNA polymerase catalyzes the transcription of DNA into RNA using the four ribonucleoside triphosphates as substrates. This is DNA-directed RNA polymerase subunit beta' (rpoC1) from Chlorella vulgaris (Green alga).